The chain runs to 198 residues: Glycerol-3-phosphate acyltransferase (198 aa).

The next 5 helical transmembrane spans lie at 1-21 (MTII…GFLF), 77-97 (HLFE…PIWL), 111-131 (MFIA…LIIL), 136-156 (IVSL…FLDI), and 157-177 (GVTN…VILK).

The protein belongs to the PlsY family. In terms of assembly, probably interacts with PlsX.

Its subcellular location is the cell inner membrane. The enzyme catalyses an acyl phosphate + sn-glycerol 3-phosphate = a 1-acyl-sn-glycero-3-phosphate + phosphate. Its pathway is lipid metabolism; phospholipid metabolism. In terms of biological role, catalyzes the transfer of an acyl group from acyl-phosphate (acyl-PO(4)) to glycerol-3-phosphate (G3P) to form lysophosphatidic acid (LPA). This enzyme utilizes acyl-phosphate as fatty acyl donor, but not acyl-CoA or acyl-ACP. The chain is Glycerol-3-phosphate acyltransferase from Prochlorococcus marinus (strain MIT 9515).